The following is a 210-amino-acid chain: Protein-methionine-sulfoxide reductase heme-binding subunit MsrQ (210 aa).

6 helical membrane-spanning segments follow: residues 8–28 (LAVFLAACIAPVWWLYQAWIF), 37–57 (VLVENFGVATLVMLLITLSMT), 75–95 (LGLWCFAYALLHLSMYALFIL), 110–130 (PYIIVGALALLGLLALAVTSN), 147–167 (IIYVILGLGLLHMFWIVRADL), and 169–189 (EWALYAGIGAFLLLLRIPVFA).

It belongs to the MsrQ family. As to quaternary structure, heterodimer of a catalytic subunit (MsrP) and a heme-binding subunit (MsrQ). The cofactor is FMN. It depends on heme b as a cofactor.

It is found in the cell inner membrane. Part of the MsrPQ system that repairs oxidized periplasmic proteins containing methionine sulfoxide residues (Met-O), using respiratory chain electrons. Thus protects these proteins from oxidative-stress damage caused by reactive species of oxygen and chlorine generated by the host defense mechanisms. MsrPQ is essential for the maintenance of envelope integrity under bleach stress, rescuing a wide series of structurally unrelated periplasmic proteins from methionine oxidation. MsrQ provides electrons for reduction to the reductase catalytic subunit MsrP, using the quinone pool of the respiratory chain. This is Protein-methionine-sulfoxide reductase heme-binding subunit MsrQ from Pseudomonas syringae pv. syringae (strain B728a).